The sequence spans 78 residues: Large ribosomal subunit protein eL20 (78 aa).

It belongs to the eukaryotic ribosomal protein eL20 family. In terms of assembly, part of the 50S ribosomal subunit. Binds 23S rRNA.

This chain is Large ribosomal subunit protein eL20, found in Thermococcus sibiricus (strain DSM 12597 / MM 739).